Consider the following 720-residue polypeptide: Connector enhancer of kinase suppressor of ras 1 (720 aa).

An SAM domain is found at 7–70 (WTPGKVATWL…LGGVEQLQAL (64 aa)). Residues 78-164 (NLQSLTEGLL…QVLHEDGPAA (87 aa)) enclose the CRIC domain. One can recognise a PDZ domain in the interval 196-285 (KAVLEQVQLD…GLSLVLKKIP (90 aa)). Positions 285–390 (PIPETPPQTP…RKKSKGLATR (106 aa)) are disordered. Residues 304-317 (RSPSLSLAPLSPRA) show a composition bias toward low complexity. Residues Ser-307 and Ser-314 each carry the phosphoserine modification. The segment covering 348–359 (EPLPIPPEPPAI) has biased composition (pro residues). Positions 379–390 (VGRKKSKGLATR) are enriched in basic residues. The 100-residue stretch at 403-502 (RPDCDGWLLL…WVRHLITCIS (100 aa)) folds into the PH domain. The segment at 504–573 (YQSPGRAPPP…TSFGSLTDSS (70 aa)) is disordered. The span at 518–530 (CYSETEAEDPDDE) shows a compositional bias: acidic residues. Residues 533–546 (SHSASPSPAQAGSP) show a composition bias toward low complexity. Over residues 553–571 (PAATPTQRSPRTSFGSLTD) the composition is skewed to polar residues. A coiled-coil region spans residues 615 to 646 (QLNERVHRVRALQSTLKAKLQELQVLEEVLGD). A disordered region spans residues 676 to 720 (QAEGSSHILTSDSTEQSPHSLPSDPEEHSHLCPLTSESSLRPPDL). Residues 678 to 695 (EGSSHILTSDSTEQSPHS) show a composition bias toward polar residues.

Belongs to the CNKSR family. In terms of assembly, interacts with RHO and RALGDS. Post-translationally, phosphorylated on tyrosine.

It is found in the cytoplasm. It localises to the membrane. May function as an adapter protein or regulator of Ras signaling pathways. The chain is Connector enhancer of kinase suppressor of ras 1 (CNKSR1) from Homo sapiens (Human).